A 74-amino-acid chain; its full sequence is U4-theraphotoxin-Cg1a (74 aa).

Positions Met-1–Ala-19 are cleaved as a signal peptide. Positions Ala-20–Arg-39 are excised as a propeptide. 3 disulfides stabilise this stretch: Cys-42-Cys-56, Cys-49-Cys-61, and Cys-55-Cys-71.

It belongs to the neurotoxin 36 family. 01 subfamily. As to expression, expressed by the venom gland.

The protein resides in the secreted. Probable ion channel inhibitor. The polypeptide is U4-theraphotoxin-Cg1a (Chilobrachys guangxiensis (Chinese earth tiger tarantula)).